Reading from the N-terminus, the 547-residue chain is Sodium-coupled neutral amino acid transporter 4 (547 aa).

Residues 1-104 (MDPIELRSVN…GLSYAMANTG (104 aa)) lie on the Extracellular side of the membrane. Position 49 is a phosphoserine (S49). The chain crosses the membrane as a helical span at residues 105 to 125 (IVLFVIMLLTVAILSLYSVHL). Residues 126-151 (LLKTAKEGGSLIYEKLGEKAFGWPGK) lie on the Cytoplasmic side of the membrane. A helical membrane pass occupies residues 152–172 (IGAFISITMQNIGAMSSYLFI). Residues 173–195 (IKYELPEVIRVFMGLEENTGEWY) lie on the Extracellular side of the membrane. Residues 196-216 (LNGNYLVLFVSVGIILPLSLL) traverse the membrane as a helical segment. Residues 217-220 (KNLG) lie on the Cytoplasmic side of the membrane. Residues 221 to 241 (YLGYTSGFSLTCMVFFVSVVI) traverse the membrane as a helical segment. Residues 242–332 (YKKFQIPCPL…PKYFVFNSRT (91 aa)) lie on the Extracellular side of the membrane. The cysteines at positions 249 and 321 are disulfide-linked. 3 N-linked (GlcNAc...) asparagine glycosylation sites follow: N260, N264, and N276. Residues 333–353 (AYAIPILAFAFVCHPEVLPIY) traverse the membrane as a helical segment. The Cytoplasmic segment spans residues 354 to 369 (SELKDRSRRKMQTVSN). Residues 370 to 390 (ISITGMLVMYLLAALFGYLSF) traverse the membrane as a helical segment. The Extracellular portion of the chain corresponds to 391–411 (YGEVEDELLHAYSKVYTFDTA). A helical membrane pass occupies residues 412–432 (LLMVRLAVLVAVTLTVPIVLF). Over 433–453 (PIRTSVITLLFPRRPFSWVKH) the chain is Cytoplasmic. A helical transmembrane segment spans residues 454–474 (FGIAAIIIALNNVLVILVPTI). The Extracellular portion of the chain corresponds to 475-476 (KY). A helical transmembrane segment spans residues 477–497 (IFGFIGASSATMLIFILPAAF). The Cytoplasmic portion of the chain corresponds to 498–514 (YLKLVKKEPLRSPQKIG). A helical transmembrane segment spans residues 515–535 (ALVFLVTGIIFMMGSMALIII). The Extracellular portion of the chain corresponds to 536–547 (DWIYNPPNPDHH).

It belongs to the amino acid/polyamine transporter 2 family. Post-translationally, the disulfide bond plays an important role in substrate transport, but has no effect on trafficking to the cell surface. As to expression, expressed predominantly in liver, and at lower level in skeletal muscle.

The protein localises to the cell membrane. It is found in the cell projection. It localises to the microvillus membrane. The enzyme catalyses L-alanine(in) + Na(+)(in) = L-alanine(out) + Na(+)(out). It carries out the reaction L-serine(in) + Na(+)(in) = L-serine(out) + Na(+)(out). It catalyses the reaction glycine(in) + Na(+)(in) = glycine(out) + Na(+)(out). The catalysed reaction is L-cysteine(in) + Na(+)(in) = L-cysteine(out) + Na(+)(out). The enzyme catalyses L-asparagine(in) + Na(+)(in) = L-asparagine(out) + Na(+)(out). It carries out the reaction L-threonine(in) + Na(+)(in) = L-threonine(out) + Na(+)(out). It catalyses the reaction L-proline(in) + Na(+)(in) = L-proline(out) + Na(+)(out). The catalysed reaction is L-methionine(in) + Na(+)(in) = L-methionine(out) + Na(+)(out). The enzyme catalyses L-glutamine(in) + Na(+)(in) = L-glutamine(out) + Na(+)(out). It carries out the reaction L-histidine(in) + Na(+)(in) = L-histidine(out) + Na(+)(out). Functionally, symporter that cotransports neutral amino acids and sodium ions from the extraccellular to the intracellular side of the cell membrane. The transport is electrogenic, pH dependent and partially tolerates substitution of Na(+) by Li(+). Preferentially transports smaller amino acids, such as glycine, L-alanine, L-serine, L-asparagine and L-threonine, followed by L-cysteine, L-histidine, L-proline and L-glutamine and L-methionine. This is Sodium-coupled neutral amino acid transporter 4 from Rattus norvegicus (Rat).